The chain runs to 407 residues: 1-deoxy-D-xylulose 5-phosphate reductoisomerase (407 aa).

Thr-25, Gly-26, Ser-27, Ile-28, Asn-53, and Asn-136 together coordinate NADPH. Lys-137 provides a ligand contact to 1-deoxy-D-xylulose 5-phosphate. Position 138 (Glu-138) interacts with NADPH. Asp-162 lines the Mn(2+) pocket. 4 residues coordinate 1-deoxy-D-xylulose 5-phosphate: Ser-163, Glu-164, Ser-188, and His-211. Residue Glu-164 coordinates Mn(2+). Gly-217 serves as a coordination point for NADPH. 1-deoxy-D-xylulose 5-phosphate-binding residues include Ser-224, Asn-229, Lys-230, and Glu-233. Glu-233 serves as a coordination point for Mn(2+).

The protein belongs to the DXR family. Mg(2+) is required as a cofactor. Requires Mn(2+) as cofactor.

The catalysed reaction is 2-C-methyl-D-erythritol 4-phosphate + NADP(+) = 1-deoxy-D-xylulose 5-phosphate + NADPH + H(+). The protein operates within isoprenoid biosynthesis; isopentenyl diphosphate biosynthesis via DXP pathway; isopentenyl diphosphate from 1-deoxy-D-xylulose 5-phosphate: step 1/6. Its function is as follows. Catalyzes the NADPH-dependent rearrangement and reduction of 1-deoxy-D-xylulose-5-phosphate (DXP) to 2-C-methyl-D-erythritol 4-phosphate (MEP). The polypeptide is 1-deoxy-D-xylulose 5-phosphate reductoisomerase (Bradyrhizobium sp. (strain ORS 278)).